The sequence spans 492 residues: NADH-quinone oxidoreductase subunit N (492 aa).

14 helical membrane passes run 12 to 32 (LLPYAPIIAVVITVLVVMIAI), 44 to 64 (ISVVGLNIGLFILLGQMAGII), 76 to 96 (LFVIDNFAQFNMVIIFICALA), 115 to 135 (LYLLMLLSTVGALLMVCAQHL), 138 to 158 (FFMSLEMLSIPLYGMLSYTYM), 169 to 189 (YLVLSATASATLLMGMAFIYA), 212 to 232 (LILGAAMMMFGIAFKLSAAPF), 244 to 264 (PAPIATYLASVSKVAMMALAV), 272 to 292 (LLALPSVQMLLMVMATLSILL), 306 to 326 (LLGYSSIAHMGYVLIVIVSIG), 334 to 354 (SMYMAIYAFTSIGAFGVVTLM), 381 to 401 (TAVMTIMMLSLAGIPLTAGFI), 416 to 438 (WFLAAMIILGSAIGLFYYLRVLL), and 463 to 483 (IMVIAVTAIIVFFGVLPNSMI).

It belongs to the complex I subunit 2 family. In terms of assembly, NDH-1 is composed of 14 different subunits. Subunits NuoA, H, J, K, L, M, N constitute the membrane sector of the complex.

Its subcellular location is the cell inner membrane. It carries out the reaction a quinone + NADH + 5 H(+)(in) = a quinol + NAD(+) + 4 H(+)(out). NDH-1 shuttles electrons from NADH, via FMN and iron-sulfur (Fe-S) centers, to quinones in the respiratory chain. The immediate electron acceptor for the enzyme in this species is believed to be ubiquinone. Couples the redox reaction to proton translocation (for every two electrons transferred, four hydrogen ions are translocated across the cytoplasmic membrane), and thus conserves the redox energy in a proton gradient. The chain is NADH-quinone oxidoreductase subunit N from Psychrobacter arcticus (strain DSM 17307 / VKM B-2377 / 273-4).